The sequence spans 157 residues: MSDKPAYLTRDGRARLEAELEELVTKGRKEIAERINAAKELGDISESGEYEDAKNQQAHLEGRIREIKSILARAQIIDEENGSNHEVRIGSRVTVRIDGEHEEETWTIVGSTEAKPSEGKISNESPIGAALLGKRPSQQVTVETPSGTMKLTILNIQ.

The stretch at 13-75 (RARLEAELEE…EIKSILARAQ (63 aa)) forms a coiled coil.

The protein belongs to the GreA/GreB family.

Functionally, necessary for efficient RNA polymerase transcription elongation past template-encoded arresting sites. The arresting sites in DNA have the property of trapping a certain fraction of elongating RNA polymerases that pass through, resulting in locked ternary complexes. Cleavage of the nascent transcript by cleavage factors such as GreA or GreB allows the resumption of elongation from the new 3'terminus. GreA releases sequences of 2 to 3 nucleotides. The sequence is that of Transcription elongation factor GreA from Roseiflexus castenholzii (strain DSM 13941 / HLO8).